An 81-amino-acid chain; its full sequence is Photosystem I iron-sulfur center (81 aa).

2 consecutive 4Fe-4S ferredoxin-type domains span residues 2–31 (SHTVKIYDTCIGCTQCVRACPTDVLEMAPW) and 39–68 (VASAPRTEDCVGCKRCESACPTDFLSVRVY). [4Fe-4S] cluster is bound by residues Cys11, Cys14, Cys17, Cys21, Cys48, Cys51, Cys54, and Cys58.

As to quaternary structure, the eukaryotic PSI reaction center is composed of at least 11 subunits. [4Fe-4S] cluster is required as a cofactor.

The protein localises to the plastid. Its subcellular location is the chloroplast thylakoid membrane. The catalysed reaction is reduced [plastocyanin] + hnu + oxidized [2Fe-2S]-[ferredoxin] = oxidized [plastocyanin] + reduced [2Fe-2S]-[ferredoxin]. Apoprotein for the two 4Fe-4S centers FA and FB of photosystem I (PSI); essential for photochemical activity. FB is the terminal electron acceptor of PSI, donating electrons to ferredoxin. The C-terminus interacts with PsaA/B/D and helps assemble the protein into the PSI complex. Required for binding of PsaD and PsaE to PSI. PSI is a plastocyanin/cytochrome c6-ferredoxin oxidoreductase, converting photonic excitation into a charge separation, which transfers an electron from the donor P700 chlorophyll pair to the spectroscopically characterized acceptors A0, A1, FX, FA and FB in turn. The protein is Photosystem I iron-sulfur center of Tupiella akineta (Green alga).